The following is a 697-amino-acid chain: Glycine--tRNA ligase beta subunit (697 aa).

The protein belongs to the class-II aminoacyl-tRNA synthetase family. Tetramer of two alpha and two beta subunits.

Its subcellular location is the cytoplasm. The enzyme catalyses tRNA(Gly) + glycine + ATP = glycyl-tRNA(Gly) + AMP + diphosphate. The chain is Glycine--tRNA ligase beta subunit from Ralstonia nicotianae (strain ATCC BAA-1114 / GMI1000) (Ralstonia solanacearum).